A 261-amino-acid polypeptide reads, in one-letter code: tRNA pseudouridine synthase A (261 aa).

Catalysis depends on Asp51, which acts as the Nucleophile. Residue Tyr109 participates in substrate binding.

Belongs to the tRNA pseudouridine synthase TruA family. In terms of assembly, homodimer.

It carries out the reaction uridine(38/39/40) in tRNA = pseudouridine(38/39/40) in tRNA. Functionally, formation of pseudouridine at positions 38, 39 and 40 in the anticodon stem and loop of transfer RNAs. The sequence is that of tRNA pseudouridine synthase A from Shewanella denitrificans (strain OS217 / ATCC BAA-1090 / DSM 15013).